Reading from the N-terminus, the 28-residue chain is Toxin a (28 aa).

The 26-residue stretch at 3–28 (VPGNYPLDSYGNCYPCTILGDNQYCI) folds into the LCN-type CS-alpha/beta domain.

This sequence belongs to the long (3 C-C) scorpion toxin superfamily. As to expression, expressed by the venom gland.

The protein resides in the secreted. Its function is as follows. Binds to sodium channels (Nav) and affects the channel activation process. The chain is Toxin a from Androctonus crassicauda (Arabian fat-tailed scorpion).